The primary structure comprises 155 residues: Pathogenesis-related protein STH-21 (155 aa).

Belongs to the BetVI family.

In Solanum tuberosum (Potato), this protein is Pathogenesis-related protein STH-21 (STH-21).